A 249-amino-acid chain; its full sequence is Small ribosomal subunit protein uS2 (249 aa).

It belongs to the universal ribosomal protein uS2 family.

This is Small ribosomal subunit protein uS2 from Chlorobaculum tepidum (strain ATCC 49652 / DSM 12025 / NBRC 103806 / TLS) (Chlorobium tepidum).